An 800-amino-acid polypeptide reads, in one-letter code: Blood-group-substance endo-1,4-beta-galactosidase (800 aa).

An N-terminal signal peptide occupies residues Met1–Ala35.

The protein belongs to the glycosyl hydrolase 98 family.

The protein localises to the secreted. It carries out the reaction Endohydrolysis of (1-&gt;4)-beta-D-galactosidic linkages in blood group A and B substances.. Its function is as follows. Endo-beta-galactosidase capable of releasing both the blood group A trisaccharide (A-Tri; GalNAcalpha1--&gt;3(Fucalpha1--&gt;2)Gal) and B trisaccharide (B-Tri; Galalpha1--&gt;3(Fucalpha1--&gt;2)Gal) glycotopes from blood group A- and B-containing glycoconjugates, respectively. The protein is Blood-group-substance endo-1,4-beta-galactosidase (eabC) of Clostridium perfringens.